The primary structure comprises 253 residues: Alpha-acetolactate decarboxylase (253 aa).

Belongs to the alpha-acetolactate decarboxylase family.

It carries out the reaction (2S)-2-acetolactate + H(+) = (R)-acetoin + CO2. It functions in the pathway polyol metabolism; (R,R)-butane-2,3-diol biosynthesis; (R,R)-butane-2,3-diol from pyruvate: step 2/3. Functionally, converts acetolactate into acetoin. This is Alpha-acetolactate decarboxylase (alsD) from Bacillus licheniformis (strain ATCC 14580 / DSM 13 / JCM 2505 / CCUG 7422 / NBRC 12200 / NCIMB 9375 / NCTC 10341 / NRRL NRS-1264 / Gibson 46).